A 484-amino-acid polypeptide reads, in one-letter code: UDP-N-acetylmuramate--L-alanine ligase (484 aa).

126 to 132 (GTHGKTT) contacts ATP.

The protein belongs to the MurCDEF family.

The protein localises to the cytoplasm. The enzyme catalyses UDP-N-acetyl-alpha-D-muramate + L-alanine + ATP = UDP-N-acetyl-alpha-D-muramoyl-L-alanine + ADP + phosphate + H(+). It functions in the pathway cell wall biogenesis; peptidoglycan biosynthesis. Its function is as follows. Cell wall formation. The polypeptide is UDP-N-acetylmuramate--L-alanine ligase (Aeromonas hydrophila subsp. hydrophila (strain ATCC 7966 / DSM 30187 / BCRC 13018 / CCUG 14551 / JCM 1027 / KCTC 2358 / NCIMB 9240 / NCTC 8049)).